The following is a 2082-amino-acid chain: Probable ATP-dependent helicase PF08_0048 (2082 aa).

The HSA domain occupies 66–138; that stretch reads KIVEPAKTPE…EEKRLKLYSK (73 aa). Low complexity predominate over residues 209–221; sequence NNSEIVNNNASSV. 2 disordered regions span residues 209–234 and 301–470; these read NNSE…DDLT and NVIE…SPTR. Composition is skewed to basic and acidic residues over residues 419–448 and 455–465; these read NSDH…HIDN and TGEDYKSDKEN. A coiled-coil region spans residues 476-531; the sequence is KKEKYDEYDTKLKIEKREEENKNYEKDEHEYESDNYDKEKINKKKELILLKNDIEN. The segment at 532-641 is disordered; sequence DSDETSEHIK…KNDSDDNDDI (110 aa). Positions 536-545 are enriched in basic and acidic residues; that stretch reads TSEHIKRDSR. Over residues 579-598 the composition is skewed to low complexity; that stretch reads DNNNSENDNNNDNNNDNNND. The span at 599–627 shows a compositional bias: acidic residues; it reads NNDDNNDDNNDDNNDDNNDDNNDDNNDDN. In terms of domain architecture, Helicase ATP-binding spans 674–839; that stretch reads LYLYKNNING…WSLLHFLMPN (166 aa). 687-694 serves as a coordination point for ATP; the sequence is DEMGLGKT. The DEAH box motif lies at 790–793; it reads DEAH. The interval 1199 to 1255 is disordered; the sequence is EQNNNNSKDNNNNIDNNNNIDNNNNIDNNNNIDNNNNIDNNNNNIDNNNNIDNHHNN. Positions 1772–1922 constitute a Helicase C-terminal domain; that stretch reads ALEKLLSKCK…NICINMGNFN (151 aa). The stretch at 1972 to 2060 forms a coiled coil; the sequence is EQVENKDKMN…DEMRMKIEIE (89 aa).

Belongs to the SNF2/RAD54 helicase family. SWR1 subfamily. Component of a chromatin-remodeling complex.

Its subcellular location is the nucleus. In terms of biological role, catalytic component of a chromatin remodeling complex. The polypeptide is Probable ATP-dependent helicase PF08_0048 (Plasmodium falciparum (isolate 3D7)).